Here is a 1122-residue protein sequence, read N- to C-terminus: Adhesin P1 (1122 aa).

The first 30 residues, Met1–Ala30, serve as a signal peptide directing secretion. Disordered stretches follow at residues Ala183–Val209, Asp244–Thr273, and Gln544–Glu563. Residues Ala195–Ala208 are compositionally biased toward gly residues. The segment covering Leu259 to Thr273 has biased composition (polar residues). The chain crosses the membrane as a helical span at residues Val997–Ile1021. The segment at Lys1066 to Glu1122 is disordered. The span at Ala1079–Glu1122 shows a compositional bias: low complexity.

The protein belongs to the adhesin P1 family.

Its subcellular location is the cell membrane. Functionally, could be involved in cytadherence. The chain is Adhesin P1 (gapA) from Mycoplasmoides gallisepticum (Mycoplasma gallisepticum).